A 69-amino-acid chain; its full sequence is Large ribosomal subunit protein uL29 (69 aa).

The protein belongs to the universal ribosomal protein uL29 family.

In Sulfolobus acidocaldarius (strain ATCC 33909 / DSM 639 / JCM 8929 / NBRC 15157 / NCIMB 11770), this protein is Large ribosomal subunit protein uL29.